Here is a 353-residue protein sequence, read N- to C-terminus: Survival factor 2 (353 aa).

This sequence belongs to the SVF1 family.

The protein localises to the cytoplasm. It localises to the nucleus. The polypeptide is Survival factor 2 (svf2) (Schizosaccharomyces pombe (strain 972 / ATCC 24843) (Fission yeast)).